The following is a 331-amino-acid chain: Ferredoxin--NADP reductase 2 (331 aa).

FAD contacts are provided by glutamate 37, glutamine 45, tyrosine 50, valine 90, phenylalanine 124, aspartate 286, and threonine 327.

This sequence belongs to the ferredoxin--NADP reductase type 2 family. In terms of assembly, homodimer. Requires FAD as cofactor.

The catalysed reaction is 2 reduced [2Fe-2S]-[ferredoxin] + NADP(+) + H(+) = 2 oxidized [2Fe-2S]-[ferredoxin] + NADPH. The protein is Ferredoxin--NADP reductase 2 of Listeria monocytogenes serovar 1/2a (strain ATCC BAA-679 / EGD-e).